The sequence spans 458 residues: Probable ECA polymerase (458 aa).

The next 11 membrane-spanning stretches (helical) occupy residues 3–23, 37–57, 65–85, 112–132, 154–174, 180–200, 201–221, 222–242, 340–360, 377–397, and 409–429; these read LAQF…VLTL, VFFS…TCLL, VVPV…YAIY, THLT…IFFL, GVAL…VYFL, AWFF…VIVG, GTRA…IVRG, WISL…MFWL, LVVM…GMII, YKAA…IVLA, and VFFC…YWLF.

This sequence belongs to the WzyE family. As to quaternary structure, probably part of a complex composed of WzxE, WzyE and WzzE.

The protein resides in the cell inner membrane. The protein operates within bacterial outer membrane biogenesis; enterobacterial common antigen biosynthesis. Its function is as follows. Probably involved in the polymerization of enterobacterial common antigen (ECA) trisaccharide repeat units. The sequence is that of Probable ECA polymerase from Serratia proteamaculans (strain 568).